Consider the following 141-residue polypeptide: Nucleoside triphosphatase NudI (141 aa).

The 141-residue stretch at 1-141 folds into the Nudix hydrolase domain; it reads MRQRTIVCPI…RLTFTQKGLL (141 aa). Positions 38 to 59 match the Nudix box motif; that stretch reads GGMEPGETMEEALRREIREELG.

Belongs to the Nudix hydrolase family. NudI subfamily. Monomer. It depends on Mg(2+) as a cofactor.

The enzyme catalyses a ribonucleoside 5'-triphosphate + H2O = a ribonucleoside 5'-phosphate + diphosphate + H(+). The catalysed reaction is a 2'-deoxyribonucleoside 5'-triphosphate + H2O = a 2'-deoxyribonucleoside 5'-phosphate + diphosphate + H(+). It catalyses the reaction dUTP + H2O = dUMP + diphosphate + H(+). It carries out the reaction dTTP + H2O = dTMP + diphosphate + H(+). The enzyme catalyses dCTP + H2O = dCMP + diphosphate + H(+). In terms of biological role, catalyzes the hydrolysis of nucleoside triphosphates, with a preference for pyrimidine deoxynucleoside triphosphates (dUTP, dTTP and dCTP). In Enterobacter sp. (strain 638), this protein is Nucleoside triphosphatase NudI.